A 441-amino-acid polypeptide reads, in one-letter code: Ribulose bisphosphate carboxylase large chain (441 aa).

Lys5 is modified (N6,N6,N6-trimethyllysine). Residues Asn114 and Thr164 each coordinate substrate. Lys166 (proton acceptor) is an active-site residue. Lys168 is a substrate binding site. Residues Lys192, Asp194, and Glu195 each contribute to the Mg(2+) site. Position 192 is an N6-carboxylysine (Lys192). The Proton acceptor role is filled by His285. Positions 286, 318, and 370 each coordinate substrate.

The protein belongs to the RuBisCO large chain family. Type I subfamily. In terms of assembly, heterohexadecamer of 8 large chains and 8 small chains; disulfide-linked. The disulfide link is formed within the large subunit homodimers. Mg(2+) is required as a cofactor. The disulfide bond which can form in the large chain dimeric partners within the hexadecamer appears to be associated with oxidative stress and protein turnover.

It localises to the plastid. The protein localises to the chloroplast. The catalysed reaction is 2 (2R)-3-phosphoglycerate + 2 H(+) = D-ribulose 1,5-bisphosphate + CO2 + H2O. It carries out the reaction D-ribulose 1,5-bisphosphate + O2 = 2-phosphoglycolate + (2R)-3-phosphoglycerate + 2 H(+). In terms of biological role, ruBisCO catalyzes two reactions: the carboxylation of D-ribulose 1,5-bisphosphate, the primary event in carbon dioxide fixation, as well as the oxidative fragmentation of the pentose substrate in the photorespiration process. Both reactions occur simultaneously and in competition at the same active site. In Begonia metallica x Begonia sanguinea, this protein is Ribulose bisphosphate carboxylase large chain.